A 266-amino-acid polypeptide reads, in one-letter code: Hydroxyethylthiazole kinase (266 aa).

A substrate-binding site is contributed by Met45. ATP contacts are provided by Arg120 and Thr165. Ala192 provides a ligand contact to substrate.

The protein belongs to the Thz kinase family. Mg(2+) serves as cofactor.

The catalysed reaction is 5-(2-hydroxyethyl)-4-methylthiazole + ATP = 4-methyl-5-(2-phosphooxyethyl)-thiazole + ADP + H(+). It participates in cofactor biosynthesis; thiamine diphosphate biosynthesis; 4-methyl-5-(2-phosphoethyl)-thiazole from 5-(2-hydroxyethyl)-4-methylthiazole: step 1/1. Catalyzes the phosphorylation of the hydroxyl group of 4-methyl-5-beta-hydroxyethylthiazole (THZ). The chain is Hydroxyethylthiazole kinase from Psychrobacter sp. (strain PRwf-1).